The sequence spans 246 residues: Thaumatin-like protein 1 (246 aa).

A signal peptide spans 1 to 24; the sequence is MMKSQAALLGLTTLAILFFSGAHA. 8 cysteine pairs are disulfide-bonded: C33/C245, C81/C91, C96/C103, C151/C234, C156/C217, C164/C180, C184/C193, and C194/C204.

The protein belongs to the thaumatin family. In terms of tissue distribution, equally expressed in the abscission zone and surrounding tissues of both fruitlets and leaves.

It is found in the secreted. Functionally, may be involved in protecting plant tissues from pathogen infection. This chain is Thaumatin-like protein 1, found in Prunus persica (Peach).